The following is a 220-amino-acid chain: Sec-independent protein translocase protein TatB (220 aa).

The chain crosses the membrane as a helical span at residues 1-21; the sequence is MFDIGFSELLLVLVIGLVVLG. The interval 192-220 is disordered; that stretch reads KQQIDTIDSHGTDLSSAGPSRIHQPGGDQ.

This sequence belongs to the TatB family. The Tat system comprises two distinct complexes: a TatABC complex, containing multiple copies of TatA, TatB and TatC subunits, and a separate TatA complex, containing only TatA subunits. Substrates initially bind to the TatABC complex, which probably triggers association of the separate TatA complex to form the active translocon.

It is found in the cell inner membrane. In terms of biological role, part of the twin-arginine translocation (Tat) system that transports large folded proteins containing a characteristic twin-arginine motif in their signal peptide across membranes. Together with TatC, TatB is part of a receptor directly interacting with Tat signal peptides. TatB may form an oligomeric binding site that transiently accommodates folded Tat precursor proteins before their translocation. This chain is Sec-independent protein translocase protein TatB, found in Yersinia pestis bv. Antiqua (strain Antiqua).